Reading from the N-terminus, the 248-residue chain is 3-deoxy-manno-octulosonate cytidylyltransferase (248 aa).

The protein belongs to the KdsB family.

The protein resides in the cytoplasm. The enzyme catalyses 3-deoxy-alpha-D-manno-oct-2-ulosonate + CTP = CMP-3-deoxy-beta-D-manno-octulosonate + diphosphate. It functions in the pathway nucleotide-sugar biosynthesis; CMP-3-deoxy-D-manno-octulosonate biosynthesis; CMP-3-deoxy-D-manno-octulosonate from 3-deoxy-D-manno-octulosonate and CTP: step 1/1. Its pathway is bacterial outer membrane biogenesis; lipopolysaccharide biosynthesis. Activates KDO (a required 8-carbon sugar) for incorporation into bacterial lipopolysaccharide in Gram-negative bacteria. This is 3-deoxy-manno-octulosonate cytidylyltransferase from Escherichia coli O6:H1 (strain CFT073 / ATCC 700928 / UPEC).